The primary structure comprises 906 residues: Cadherin-2 (906 aa).

A signal peptide spans 1 to 25 (MCRIAGAPRTLLPLLAALLQASVEA). Residues 26 to 159 (SGEIALCKTG…HSGHLQRQKR (134 aa)) constitute a propeptide that is removed on maturation. Phosphoserine occurs at positions 96 and 135. Cadherin domains follow at residues 160 to 267 (DWVI…RPEF), 268 to 382 (LHQV…PPEF), 383 to 497 (TAMT…NPYF), 498 to 603 (APNP…DNAP), and 604 to 714 (QVLP…DVDR). The Extracellular segment spans residues 160-724 (DWVIPPINLP…IVGAGLGTGA (565 aa)). A Ca(2+)-binding site is contributed by Glu-170. Asn-190 carries an N-linked (GlcNAc...) asparagine glycan. Residues Asp-226, Glu-228, Asp-259, Met-260, Asn-261, Asp-262, and Asn-263 each contribute to the Ca(2+) site. Asn-273 carries an N-linked (GlcNAc...) asparagine glycan. Ca(2+)-binding residues include Asp-293, Asp-295, and Asn-301. Asn-325 is a glycosylation site (N-linked (GlcNAc...) asparagine). Residue Asp-353 coordinates Ca(2+). N-linked (GlcNAc...) asparagine glycosylation is found at Asn-402, Asn-572, Asn-622, Asn-651, and Asn-692. Residues 725–745 (IIAILLCIIILLILVLMFVVW) traverse the membrane as a helical segment. At 746-906 (MKRRDKERQA…LADMYGGGDD (161 aa)) the chain is on the cytoplasmic side. Low complexity predominate over residues 863–880 (SGSTAGSLSSLNSSSSGG). The interval 863–884 (SGSTAGSLSSLNSSSSGGEQDY) is disordered.

Homodimer (via extracellular region). Can also form heterodimers with other cadherins (via extracellular region). Dimerization occurs in trans, i.e. with a cadherin chain from another cell. Interacts with CDCP1. Interacts with PCDH8; this complex may also include TAOK2. The interaction with PCDH8 may lead to internalization through TAOK2/p38 MAPK pathway. Identified in a complex containing FGFR4, NCAM1, CDH2, PLCG1, FRS2, SRC, SHC1, GAP43 and CTTN. May interact with OBSCN (via protein kinase domain 2). Interacts with FBXO45. Cleaved by MMP24. Ectodomain cleavage leads to the generation of a soluble 90 kDa N-terminal soluble fragment and a 45 kDa membrane-bound C-terminal fragment 1 (CTF1), which is further cleaved by gamma-secretase into a 35 kDa. Cleavage in neural stem cells by MMP24 affects CDH2-mediated anchorage of neural stem cells to ependymocytes in the adult subependymal zone, leading to modulate neural stem cell quiescence.

The protein resides in the cell membrane. It is found in the sarcolemma. The protein localises to the cell junction. It localises to the cell surface. Its subcellular location is the desmosome. The protein resides in the adherens junction. Calcium-dependent cell adhesion protein; preferentially mediates homotypic cell-cell adhesion by dimerization with a CDH2 chain from another cell. Cadherins may thus contribute to the sorting of heterogeneous cell types. Acts as a regulator of neural stem cells quiescence by mediating anchorage of neural stem cells to ependymocytes in the adult subependymal zone: upon cleavage by MMP24, CDH2-mediated anchorage is affected, leading to modulate neural stem cell quiescence. Plays a role in cell-to-cell junction formation between pancreatic beta cells and neural crest stem (NCS) cells, promoting the formation of processes by NCS cells. Required for proper neurite branching. Required for pre- and postsynaptic organization. CDH2 may be involved in neuronal recognition mechanism. In hippocampal neurons, may regulate dendritic spine density. The sequence is that of Cadherin-2 (CDH2) from Callithrix jacchus (White-tufted-ear marmoset).